Reading from the N-terminus, the 331-residue chain is D-lactate/D-glycerate dehydrogenase (331 aa).

NAD(+) is bound by residues 154–155, D174, 205–206, N211, 232–234, and D258; these read RI, VP, and FAR. R234 is a catalytic residue. Residue E263 is part of the active site. Residue H295 is the Proton donor of the active site.

The protein belongs to the D-isomer specific 2-hydroxyacid dehydrogenase family. In terms of assembly, homodimer.

The enzyme catalyses (R)-lactate + NAD(+) = pyruvate + NADH + H(+). The catalysed reaction is (R)-glycerate + NAD(+) = 3-hydroxypyruvate + NADH + H(+). Has both D-lactate and D-glycerate dehydrogenase activities. Equally active on pyruvate and hydroxypyruvate. This is D-lactate/D-glycerate dehydrogenase from Pediococcus acidilactici.